A 211-amino-acid polypeptide reads, in one-letter code: Small ribosomal subunit protein uS3 (211 aa).

One can recognise a KH type-2 domain in the interval 16–85 (IDEYFKTKLV…NPQIEVKQVE (70 aa)).

The protein belongs to the universal ribosomal protein uS3 family. As to quaternary structure, part of the 30S ribosomal subunit.

In terms of biological role, binds the lower part of the 30S subunit head. The chain is Small ribosomal subunit protein uS3 from Methanococcus maripaludis (strain C7 / ATCC BAA-1331).